The sequence spans 358 residues: Gentisate 1,2-dioxygenase (358 aa).

Residues Gln239–Pro358 enclose the Cupin type-1 domain.

The protein belongs to the gentisate 1,2-dioxygenase family. In terms of assembly, homotetramer.

It catalyses the reaction 2,5-dihydroxybenzoate + O2 = 3-maleylpyruvate + H(+). It functions in the pathway aromatic compound metabolism; naphthalene degradation. Its activity is regulated as follows. Inhibited by 2,2'-dipyridyl. Functionally, catalyzes the oxygen-dependent ring fission of gentisate between the carboxyl and proximal hydroxyl groups at positions 1 and 2 of the aromatic ring to form maleylpyruvate. No activity with cathechol and protecatechuate as substrates. Part of a 3-hydroxybenzoic acid-degradation pathway. This chain is Gentisate 1,2-dioxygenase (gdoA), found in Haloferax sp.